A 153-amino-acid polypeptide reads, in one-letter code: Glucose-6-phosphate 1-dehydrogenase (153 aa).

Positions 21 and 120 each coordinate NADP(+). D-glucose 6-phosphate is bound at residue lysine 120.

It belongs to the glucose-6-phosphate dehydrogenase family.

The protein localises to the cytoplasm. It is found in the cytosol. It carries out the reaction D-glucose 6-phosphate + NADP(+) = 6-phospho-D-glucono-1,5-lactone + NADPH + H(+). It functions in the pathway carbohydrate degradation; pentose phosphate pathway; D-ribulose 5-phosphate from D-glucose 6-phosphate (oxidative stage): step 1/3. Cytosolic glucose-6-phosphate dehydrogenase that catalyzes the first and rate-limiting step of the oxidative branch within the pentose phosphate pathway/shunt, an alternative route to glycolysis for the dissimilation of carbohydrates and a major source of reducing power and metabolic intermediates for fatty acid and nucleic acid biosynthetic processes. This is Glucose-6-phosphate 1-dehydrogenase (ZW) from Sarcophaga bullata (Grey flesh fly).